The primary structure comprises 429 residues: Enolase (429 aa).

Gln163 provides a ligand contact to (2R)-2-phosphoglycerate. Glu205 serves as the catalytic Proton donor. Mg(2+) contacts are provided by Asp242, Glu287, and Asp314. Residues Lys339, Arg368, Ser369, and Lys390 each contribute to the (2R)-2-phosphoglycerate site. Lys339 functions as the Proton acceptor in the catalytic mechanism.

This sequence belongs to the enolase family. Requires Mg(2+) as cofactor.

It localises to the cytoplasm. It is found in the secreted. The protein resides in the cell surface. The enzyme catalyses (2R)-2-phosphoglycerate = phosphoenolpyruvate + H2O. It functions in the pathway carbohydrate degradation; glycolysis; pyruvate from D-glyceraldehyde 3-phosphate: step 4/5. In terms of biological role, catalyzes the reversible conversion of 2-phosphoglycerate (2-PG) into phosphoenolpyruvate (PEP). It is essential for the degradation of carbohydrates via glycolysis. This is Enolase from Cupriavidus pinatubonensis (strain JMP 134 / LMG 1197) (Cupriavidus necator (strain JMP 134)).